Reading from the N-terminus, the 273-residue chain is Protein PERCC1 (273 aa).

Disordered stretches follow at residues 18–84 (SHES…PETP) and 253–273 (GGSE…LAEV). Positions 28-56 (EAPEISEEEEEEEEEEEEEEEEEEVDQDQ) are enriched in acidic residues. The span at 67-83 (DSQSSGVVPQDPSSPET) shows a compositional bias: polar residues.

As to expression, specifically expressed in the stomach, pancreas and intestine. In gastrointestinal tissue, expression is primarily restricted to gastric G cells and duodenal enteroendocrine cells (EECs).

Plays a critical role in intestinal function by promoting the development of enteroendocrine cells (EECs) of the gastrointestinal tract and pancreas. It is thereby required for normal enteroendocrine peptide hormone secretion. This Mus musculus (Mouse) protein is Protein PERCC1.